A 428-amino-acid chain; its full sequence is Glutamate-1-semialdehyde 2,1-aminomutase (428 aa).

An N6-(pyridoxal phosphate)lysine modification is found at Lys-265.

This sequence belongs to the class-III pyridoxal-phosphate-dependent aminotransferase family. HemL subfamily. Homodimer. Requires pyridoxal 5'-phosphate as cofactor.

It localises to the cytoplasm. The enzyme catalyses (S)-4-amino-5-oxopentanoate = 5-aminolevulinate. The protein operates within porphyrin-containing compound metabolism; protoporphyrin-IX biosynthesis; 5-aminolevulinate from L-glutamyl-tRNA(Glu): step 2/2. The polypeptide is Glutamate-1-semialdehyde 2,1-aminomutase (Shewanella sediminis (strain HAW-EB3)).